We begin with the raw amino-acid sequence, 149 residues long: Lymphocyte antigen 6 complex locus protein G5c (149 aa).

Residues 1 to 41 form the signal peptide; the sequence is MLFMAGPAASWSLRPLGLHGVPQALCAVLLTVLVMKTLVLG. Positions 59–149 constitute a UPAR/Ly6 domain; sequence LNCYRCLLET…NPDNRKNSMH (91 aa). Intrachain disulfides connect C61-C88, C64-C73, C80-C106, C115-C132, and C133-C138. N95 carries an N-linked (GlcNAc...) asparagine glycan.

As to quaternary structure, forms oligomers. In terms of processing, N-glycosylated. As to expression, detected in adult brain.

The protein localises to the secreted. In terms of biological role, may have a role in hematopoietic cell differentiation. The protein is Lymphocyte antigen 6 complex locus protein G5c (Ly6g5c) of Mus musculus (Mouse).